The sequence spans 1067 residues: MSSQNSFMSSKKDDKGKNIQVVVRCRPFNQLERKASSHSVLECESQRKEVCVRTGEVNDKLGKKTYTFDMVFGPAAKQIDVYRSVVCPILDEVIMGYNCTIFAYGQTGTGKTFTMEGERSSDEEFTWEQDPLAGIIPRTLHQIFEKLSEIGTEFSVKVSLLEIYNEELFDLLSPSPDVGERLQMFDDPRNKRGVIIKGLEEISVHNKDEVYQILERGAAKRKTASTLMNAYSSRSHSVFSVTIHMKETTIDGEELVKIGKLNLVDLAGSENIGRSGAVDKRAREAGNINQSLLTLGRVITALVERAPHIPYRESKLTRILQDSLGGRTKTSIIATVSPASINLEETMSTLDYASRAKNIMNKPEVNQKLTKKALIKEYTEEIERLKRELATAREKNGVYLSNENYEQLQGKVLSQEEMITEYSEKIAAMEEEIKRIGELFADNKKELEECTTILQCKEKELEATQNNLQESKEQLAQEAFVVSAMETTEKKLHGTANKLLSTVRETTRDVSGLHEKLDRKRAVEQHNSQVHENFAEQINRRFSVIQQTVDEYSVKQQGMLDFYTNSIDDLLGASSSALSATATAVAKSFASVQETVSKQVSHSVEEILKQETLSSQAKDDLQKLMTAHRTGLEQALRTDLLPVVTAVLDLNSHLSHCLQSFLGVADKIDSHKEDMNSFFTEHSRSLHKLRLDSSSALSSIQSEYESLKEEIATAQSTHSEGVNNLISSLQNQLNLLAMETRQQFSGFLSKGGKLQESVGCLQQDLDLVSSDAIECISSHHSKFTEQSQAVTVEIRQLAGSNMSTLEESSKQCEKLTNSINTICQESQQWCESAGQKMDSLLEEQVCYLHSSKKQIQTLHKDVEDGCGSSVVEITDRVNVQCQAQEKALTSLVEQVKDDKEMLGEQRLELNEQVQSGLNKVHVYLKEELRNDVPTGTTPQRRDYVYPSLLIKTKPRDVLLEQFRQQQQEYLESICSVISEAVEPPVEQDSLEDEPPVAVNDSVISEKSCIDLSMTCQEKGGVPFFQQKKALRKEKENRGNATLLERSKIMDEVEQSLPKSKLPLRMQN.

The Kinesin motor domain occupies 18-359 (NIQVVVRCRP…LDYASRAKNI (342 aa)). Residue 105–112 (GQTGTGKT) coordinates ATP. 3 coiled-coil regions span residues 365–480 (VNQK…QEAF), 692–721 (DSSS…HSEG), and 882–915 (QAQE…QVQS). Thr-937 carries the post-translational modification Phosphothreonine; by CDK1. Phosphoserine; by NEK6 is present on Ser-1046.

It belongs to the TRAFAC class myosin-kinesin ATPase superfamily. Kinesin family. BimC subfamily. Heterotetramer of two heavy and two light chains. Interacts with aurka. In terms of processing, phosphorylation of Thr-937 during mitosis controls the association of this protein with the spindle apparatus. Post-translationally, a subset of this protein primarily localized at the spindle pole is phosphorylated by NEK6 during mitosis. Phosphorylated on a serine residue by aurka. Highly expressed in unfertilized eggs, especially in the germinal vesicle and in the radial yolk-poor channels. Also present in testis.

Its subcellular location is the cytoplasm. The protein localises to the cytoskeleton. It localises to the spindle pole. Its function is as follows. Plus end-directed motor protein required for establishing a bipolar spindle. Associates with both interphase and spindle microtubules. May be involved in nuclear divisions taking place during the development of unfertilized eggs. Required in non-mitotic cells for transport of secretory proteins from the Golgi complex to the cell surface. This is Kinesin-like protein KIF11-A (kif11-a) from Xenopus laevis (African clawed frog).